The chain runs to 232 residues: Large ribosomal subunit protein uL1 (232 aa).

It belongs to the universal ribosomal protein uL1 family. As to quaternary structure, part of the 50S ribosomal subunit.

Its function is as follows. Binds directly to 23S rRNA. The L1 stalk is quite mobile in the ribosome, and is involved in E site tRNA release. Functionally, protein L1 is also a translational repressor protein, it controls the translation of the L11 operon by binding to its mRNA. This Maricaulis maris (strain MCS10) (Caulobacter maris) protein is Large ribosomal subunit protein uL1.